The chain runs to 311 residues: 4-diphosphocytidyl-2-C-methyl-D-erythritol kinase (311 aa).

Residue Lys-13 is part of the active site. An ATP-binding site is contributed by 114–124 (PVAGGMAGGSA). Residue Asp-156 is part of the active site.

It belongs to the GHMP kinase family. IspE subfamily.

The catalysed reaction is 4-CDP-2-C-methyl-D-erythritol + ATP = 4-CDP-2-C-methyl-D-erythritol 2-phosphate + ADP + H(+). The protein operates within isoprenoid biosynthesis; isopentenyl diphosphate biosynthesis via DXP pathway; isopentenyl diphosphate from 1-deoxy-D-xylulose 5-phosphate: step 3/6. Its function is as follows. Catalyzes the phosphorylation of the position 2 hydroxy group of 4-diphosphocytidyl-2C-methyl-D-erythritol. This Corynebacterium diphtheriae (strain ATCC 700971 / NCTC 13129 / Biotype gravis) protein is 4-diphosphocytidyl-2-C-methyl-D-erythritol kinase.